A 157-amino-acid polypeptide reads, in one-letter code: UPF0225 protein Psyr_3863 (157 aa).

Belongs to the UPF0225 family.

The chain is UPF0225 protein Psyr_3863 from Pseudomonas syringae pv. syringae (strain B728a).